A 115-amino-acid polypeptide reads, in one-letter code: uncharacterized protein (115 aa).

This is an uncharacterized protein from Caenorhabditis elegans.